Here is a 1027-residue protein sequence, read N- to C-terminus: Sodium/potassium-transporting ATPase subunit alpha-1 (1027 aa).

Positions Met-1–Asp-5 are excised as a propeptide. Basic and acidic residues predominate over residues Met-1–Tyr-10. A disordered region spans residues Met-1–Lys-39. At Gly-6–Pro-90 the chain is on the cytoplasmic side. Ser-16 is subject to Phosphoserine; by PKC. The segment covering Glu-29–Lys-39 has biased composition (basic and acidic residues). The segment at Pro-85–Pro-87 is interaction with phosphoinositide-3 kinase. Residues Glu-91–Ala-111 traverse the membrane as a helical segment. The Extracellular portion of the chain corresponds to Val-112–Tyr-134. The chain crosses the membrane as a helical span at residues Leu-135 to Ala-155. Over Lys-156–Ile-291 the chain is Cytoplasmic. The tract at residues Asp-217–Asn-238 is disordered. A helical membrane pass occupies residues Glu-292–Leu-311. The Extracellular portion of the chain corresponds to Leu-312–Ala-323. Residues Val-324–Ala-341 form a helical membrane-spanning segment. Over Thr-342 to Leu-776 the chain is Cytoplasmic. Asp-379 serves as the catalytic 4-aspartylphosphate intermediate. An ATP-binding site is contributed by Lys-490. Mg(2+)-binding residues include Asp-721 and Asp-725. A helical transmembrane segment spans residues Lys-777 to Phe-796. Topologically, residues Phe-797–Leu-806 are extracellular. The chain crosses the membrane as a helical span at residues Gly-807–Ala-827. Over Tyr-828–Lys-847 the chain is Cytoplasmic. Residues Leu-848 to Phe-870 traverse the membrane as a helical segment. Residues Phe-871 to Cys-922 are Extracellular-facing. Residues His-923 to Lys-942 traverse the membrane as a helical segment. Residues Thr-943–Asn-955 are Cytoplasmic-facing. Ser-947 is subject to Phosphoserine; by PKA. The helical transmembrane segment at Lys-956–Tyr-974 threads the bilayer. Residues Cys-975–Pro-989 lie on the Extracellular side of the membrane. Residues Asn-990–Lys-1010 form a helical membrane-spanning segment. The Cytoplasmic segment spans residues Leu-1011 to Tyr-1027.

It belongs to the cation transport ATPase (P-type) (TC 3.A.3) family. Type IIC subfamily. The sodium/potassium-transporting ATPase is composed of a catalytic alpha subunit, an auxiliary non-catalytic beta subunit and an additional regulatory subunit.

The protein resides in the cell membrane. The protein localises to the sarcolemma. It catalyses the reaction K(+)(out) + Na(+)(in) + ATP + H2O = K(+)(in) + Na(+)(out) + ADP + phosphate + H(+). This is the catalytic component of the active enzyme, which catalyzes the hydrolysis of ATP coupled with the exchange of sodium and potassium ions across the plasma membrane. This action creates the electrochemical gradient of sodium and potassium ions, providing the energy for active transport of various nutrients. This is Sodium/potassium-transporting ATPase subunit alpha-1 (atp1a1) from Catostomus commersonii (White sucker).